The chain runs to 80 residues: Exodeoxyribonuclease 7 small subunit (80 aa).

Belongs to the XseB family. Heterooligomer composed of large and small subunits.

Its subcellular location is the cytoplasm. The catalysed reaction is Exonucleolytic cleavage in either 5'- to 3'- or 3'- to 5'-direction to yield nucleoside 5'-phosphates.. In terms of biological role, bidirectionally degrades single-stranded DNA into large acid-insoluble oligonucleotides, which are then degraded further into small acid-soluble oligonucleotides. In Pseudoalteromonas translucida (strain TAC 125), this protein is Exodeoxyribonuclease 7 small subunit.